The primary structure comprises 121 residues: UPF0102 protein Dhaf_3740 (121 aa).

This sequence belongs to the UPF0102 family.

This Desulfitobacterium hafniense (strain DSM 10664 / DCB-2) protein is UPF0102 protein Dhaf_3740.